A 105-amino-acid chain; its full sequence is Saimiri transformation-associated protein (105 aa).

The Cytoplasmic portion of the chain corresponds to 1-75 (MASEPNLRYP…GPPGPSGLPG (75 aa)). Positions 1–75 (MASEPNLRYP…GPPGPSGLPG (75 aa)) are disordered. Residues 15 to 74 (GDRGPQGPPGPPGPQGPPGPQGPPGPQGPPGPQGPPGPQGPPGPQGPPGPPGPPGPSGLP) enclose the Collagen-like domain. Residues 20-71 (QGPPGPPGPQGPPGPQGPPGPQGPPGPQGPPGPQGPPGPQGPPGPPGPPGPS) are compositionally biased toward pro residues. A helical transmembrane segment spans residues 76–96 (LFVTNLLLGIIILLLLIIVAI). At 97–105 (LLVSKLVVN) the chain is on the extracellular side.

Binds to host RAS and TRAF2.

It localises to the host membrane. Functionally, acts synergistically with Tip to stimulate NF-kappa-B activity and interleukin-2 gene expression by binding to host TRAF proteins. Activation of NF-kappa-B protects lymphocytes from apoptosis, thereby facilitating viral induced cell transformation. The polypeptide is Saimiri transformation-associated protein (Saimiriine herpesvirus 2 (strain 484-77) (SaHV-2)).